Consider the following 338-residue polypeptide: Anthranilate phosphoribosyltransferase (338 aa).

5-phospho-alpha-D-ribose 1-diphosphate is bound by residues Gly-78, 81–82, Thr-86, 88–91, 106–114, and Ser-118; these read GD, NIST, and KHGNRSVSS. Anthranilate is bound at residue Gly-78. Ser-90 contributes to the Mg(2+) binding site. An anthranilate-binding site is contributed by Asn-109. Arg-164 is an anthranilate binding site. Asp-223 and Glu-224 together coordinate Mg(2+).

This sequence belongs to the anthranilate phosphoribosyltransferase family. Homodimer. Mg(2+) is required as a cofactor.

The enzyme catalyses N-(5-phospho-beta-D-ribosyl)anthranilate + diphosphate = 5-phospho-alpha-D-ribose 1-diphosphate + anthranilate. The protein operates within amino-acid biosynthesis; L-tryptophan biosynthesis; L-tryptophan from chorismate: step 2/5. Functionally, catalyzes the transfer of the phosphoribosyl group of 5-phosphorylribose-1-pyrophosphate (PRPP) to anthranilate to yield N-(5'-phosphoribosyl)-anthranilate (PRA). The protein is Anthranilate phosphoribosyltransferase of Bacillus velezensis (strain DSM 23117 / BGSC 10A6 / LMG 26770 / FZB42) (Bacillus amyloliquefaciens subsp. plantarum).